Reading from the N-terminus, the 147-residue chain is Putative pre-16S rRNA nuclease (147 aa).

This sequence belongs to the YqgF nuclease family.

Its subcellular location is the cytoplasm. Functionally, could be a nuclease involved in processing of the 5'-end of pre-16S rRNA. This Acinetobacter baylyi (strain ATCC 33305 / BD413 / ADP1) protein is Putative pre-16S rRNA nuclease.